The following is a 460-amino-acid chain: Receptor-like cytosolic serine/threonine-protein kinase RBK2 (460 aa).

Residues 1–67 (MNSASAHDLR…DADTDVQCKN (67 aa)) are disordered. Residues 7–23 (HDLRLLEVDKEKQDPKS) show a composition bias toward basic and acidic residues. In terms of domain architecture, Protein kinase spans 143–415 (FSPENIIGRG…VELLLGHEDV (273 aa)). ATP is bound by residues 149–157 (IGRGGYADV) and Lys171. The active-site Proton acceptor is Asp267. Residue Thr307 is modified to Phosphothreonine. A Phosphotyrosine modification is found at Tyr315.

This sequence belongs to the protein kinase superfamily. Ser/Thr protein kinase family. In terms of assembly, interacts with ARAC5 and ARAC10.

The protein resides in the cytoplasm. It carries out the reaction L-seryl-[protein] + ATP = O-phospho-L-seryl-[protein] + ADP + H(+). The enzyme catalyses L-threonyl-[protein] + ATP = O-phospho-L-threonyl-[protein] + ADP + H(+). The polypeptide is Receptor-like cytosolic serine/threonine-protein kinase RBK2 (RBK2) (Arabidopsis thaliana (Mouse-ear cress)).